Reading from the N-terminus, the 1001-residue chain is Serine/threonine-protein kinase TAO1 (1001 aa).

Ser9 carries the phosphoserine modification. Positions Phe28–Val281 constitute a Protein kinase domain. ATP contacts are provided by residues Ile34–Val42 and Lys57. The active-site Proton acceptor is the Asp151. Disordered regions lie at residues Pro324–Glu380 and Glu404–His431. Residues Ser350 to Ser370 show a composition bias toward low complexity. 2 positions are modified to phosphoserine: Ser421 and Ser445. Positions Ser458 to Met651 form a coiled coil. The segment at Lys567 to Lys587 is disordered. The segment covering Pro577–Lys587 has biased composition (basic and acidic residues). Thr669 carries the post-translational modification Phosphothreonine. A coiled-coil region spans residues Lys754–Ala877. The interval Pro905 to Thr1001 is disordered. A compositionally biased stretch (polar residues) spans Gly906–Thr915. Position 965 is a phosphoserine (Ser965). Polar residues predominate over residues Gly975–Thr1001.

Belongs to the protein kinase superfamily. STE Ser/Thr protein kinase family. STE20 subfamily. As to quaternary structure, self-associates. Interacts with MAP2K3. Interacts with SPRED1. Interacts with TESK1; the interaction inhibits TAOK1 kinase activity. Interacts with MAP3K7. In terms of processing, proteolytically processed by caspase-3 (CASP3). Autophosphorylated. Phosphorylated by ATM in response to DNA damage. Phosphorylated by LRRK2.

The protein localises to the cytoplasm. It carries out the reaction L-seryl-[protein] + ATP = O-phospho-L-seryl-[protein] + ADP + H(+). The enzyme catalyses L-threonyl-[protein] + ATP = O-phospho-L-threonyl-[protein] + ADP + H(+). With respect to regulation, serine/threonine-protein kinase activity is inhibited by SPRED1. In terms of biological role, serine/threonine-protein kinase involved in various processes such as p38/MAPK14 stress-activated MAPK cascade, DNA damage response and regulation of cytoskeleton stability. Phosphorylates MAP2K3, MAP2K6 and MARK2. Acts as an activator of the p38/MAPK14 stress-activated MAPK cascade by mediating phosphorylation and subsequent activation of the upstream MAP2K3 and MAP2K6 kinases. Involved in G-protein coupled receptor signaling to p38/MAPK14. In response to DNA damage, involved in the G2/M transition DNA damage checkpoint by activating the p38/MAPK14 stress-activated MAPK cascade, probably by mediating phosphorylation of MAP2K3 and MAP2K6. Acts as a regulator of cytoskeleton stability by phosphorylating 'Thr-208' of MARK2, leading to activate MARK2 kinase activity and subsequent phosphorylation and detachment of MAPT/TAU from microtubules. Also acts as a regulator of apoptosis: regulates apoptotic morphological changes, including cell contraction, membrane blebbing and apoptotic bodies formation via activation of the MAPK8/JNK cascade. During fetal development, it plays an essential role in the regulation of neuronal differentiation and migration to the cortical plate. The protein is Serine/threonine-protein kinase TAO1 (Taok1) of Rattus norvegicus (Rat).